The primary structure comprises 223 residues: MAAVGACFLQQLAVVALLALWCSHGAIASDPGLLQDFCVVDKMSQVRVNGFPCKDAKDVVAGDFFFSGLHMAGNTTNKQGSNVTTVNVAQIPGLNTMGVSLVRIDYAPNGLNPPHTHPRATEIPTVLEGSLYVGFVISNPENKLFTKVLNKGDVFVFPQGLVHFQFNNGTNNAVALAALSSQNPGVITVGNAVFGSKPSISDDILAKAFQVDKNIIDRIQAQF.

Residues Met-1–Ala-28 form the signal peptide. Cys-38 and Cys-53 are disulfide-bonded. Residues Ser-67–Asp-217 form the Cupin type-1 domain. 2 N-linked (GlcNAc...) asparagine glycosylation sites follow: Asn-74 and Asn-82. His-115, His-117, Glu-122, and His-163 together coordinate Mn(2+). Asn-168 carries an N-linked (GlcNAc...) asparagine glycan.

Belongs to the germin family. In terms of assembly, oligomer (believed to be a pentamer but probably hexamer).

The protein localises to the secreted. Its subcellular location is the extracellular space. It is found in the apoplast. Functionally, may play a role in plant defense. Probably has no oxalate oxidase activity even if the active site is conserved. This chain is Putative germin-like protein 2-2, found in Oryza sativa subsp. japonica (Rice).